The primary structure comprises 297 residues: MPIEDKRMRIMDFINFVRKPDSLSCIIQEYRAIVPEQEDGASKSCNQAVNRAQDENNALPIVRLVHSRVNLFSKEKVMSARYVDGYNHKQKFIITINSCENNTDKYLQMLWDNNVQIVVTTSSHAEKNNFNRFWSLNERTVITYNNFQIETLEIITKPHFVLTLLVLTDQKGQARKLSHFQYTAWPADGFSHDPKAFLDFFFNIDSLYADLRKHKTIGNVGPITIDCIDNNSSSEVFCVLDICLTEVKKTGMLSIANAVKKVRQKKYGCMNRLNDYVFCYHLIHAYLSMTFDIVKVR.

One can recognise a Tyrosine-protein phosphatase domain in the interval D21–Y286. Residue C227 is the Phosphocysteine intermediate of the active site.

The protein belongs to the protein-tyrosine phosphatase family.

The catalysed reaction is O-phospho-L-tyrosyl-[protein] + H2O = L-tyrosyl-[protein] + phosphate. This is Probable tyrosine phosphatase protein J2 (J3) from Microplitis demolitor (Parasitoid wasp).